Here is a 685-residue protein sequence, read N- to C-terminus: Delta-like protein 4 (685 aa).

Positions 1–26 are cleaved as a signal peptide; it reads MAAASRSASGWALLLLVALWQQRAAG. Topologically, residues 27–529 are extracellular; the sequence is SGVFQLQLQE…PVGLPPSFPW (503 aa). 2 disulfides stabilise this stretch: C50-C54 and C61-C74. N-linked (GlcNAc...) asparagine glycans are attached at residues N108 and N183. The region spanning 173 to 217 is the DSL domain; it reads VICSDNYYGDNCSRLCKKRNDHFGHYVCQPDGNLSCLPGWTGEYC. C175 and C184 are joined by a disulfide. 2 interaction with Notch1 regions span residues 185 to 187 and 191 to 195; these read SRL and RNDHF. C188 and C200 are disulfide-bonded. N205 carries an N-linked (GlcNAc...) asparagine glycan. Intrachain disulfides connect C208–C217, C222–C233, C226–C239, C241–C250, C253–C264, C259–C270, C272–C281, C288–C300, C294–C310, C312–C321, C328–C339, C333–C348, C350–C359, C366–C377, C371–C388, C390–C399, C406–C417, C411–C426, C428–C437, C444–C455, C449–C464, C466–C475, C484–C495, C489–C506, and C508–C517. EGF-like domains follow at residues 218-251, 252-282, 284-322, 324-360, 362-400, 402-438, 440-476, and 480-518; these read QQPI…RLCN, ECIP…LFCD, DLNY…VDCE, ELSE…LHCE, STLS…SNCE, KVDR…TYCE, HVSD…RRCE, and SIDA…SRCE. Residue N393 is glycosylated (N-linked (GlcNAc...) asparagine). A helical membrane pass occupies residues 530–550; it reads VAVSLGVGLAVLLVLLGMVAV. Residues 551-685 are Cytoplasmic-facing; that stretch reads AVRQLRLRRP…RNECVIATEV (135 aa).

In terms of assembly, interacts with NOTCH4. Interacts (via N-terminal DSL and MNNL domains) with NOTCH1 (via EGF-like domains). As to expression, expressed in vascular endothelium.

Its subcellular location is the cell membrane. In terms of biological role, involved in the Notch signaling pathway as Notch ligand. Activates NOTCH1 and NOTCH4. Involved in angiogenesis; negatively regulates endothelial cell proliferation and migration and angiogenic sprouting. Essential for retinal progenitor proliferation. Required for suppressing rod fates in late retinal progenitors as well as for proper generation of other retinal cell types. During spinal cord neurogenesis, inhibits V2a interneuron fate. This chain is Delta-like protein 4 (DLL4), found in Homo sapiens (Human).